The chain runs to 124 residues: Small ribosomal subunit protein uS12 (124 aa).

The tract at residues 1–32 is disordered; sequence MPTIQQLVRKGRQAKTTKTKTPALKGSPQRRG. The span at 9–18 shows a compositional bias: basic residues; the sequence is RKGRQAKTTK. A 3-methylthioaspartic acid modification is found at aspartate 89. A disordered region spans residues 105–124; it reads QGVRNRKQARSRYGAKKEKS. Positions 108-118 are enriched in basic residues; that stretch reads RNRKQARSRYG.

Belongs to the universal ribosomal protein uS12 family. In terms of assembly, part of the 30S ribosomal subunit. Contacts proteins S8 and S17. May interact with IF1 in the 30S initiation complex.

In terms of biological role, with S4 and S5 plays an important role in translational accuracy. Interacts with and stabilizes bases of the 16S rRNA that are involved in tRNA selection in the A site and with the mRNA backbone. Located at the interface of the 30S and 50S subunits, it traverses the body of the 30S subunit contacting proteins on the other side and probably holding the rRNA structure together. The combined cluster of proteins S8, S12 and S17 appears to hold together the shoulder and platform of the 30S subunit. This chain is Small ribosomal subunit protein uS12, found in Salinispora arenicola (strain CNS-205).